Consider the following 235-residue polypeptide: Cytidylate kinase (235 aa).

11–19 (GPSGVGKST) is a binding site for ATP.

It belongs to the cytidylate kinase family. Type 1 subfamily.

It localises to the cytoplasm. The enzyme catalyses CMP + ATP = CDP + ADP. It carries out the reaction dCMP + ATP = dCDP + ADP. The sequence is that of Cytidylate kinase from Syntrophotalea carbinolica (strain DSM 2380 / NBRC 103641 / GraBd1) (Pelobacter carbinolicus).